The sequence spans 210 residues: 7-methyl-GTP pyrophosphatase (210 aa).

Asp79 functions as the Proton acceptor in the catalytic mechanism.

This sequence belongs to the Maf family. YceF subfamily. A divalent metal cation serves as cofactor.

It is found in the cytoplasm. It catalyses the reaction N(7)-methyl-GTP + H2O = N(7)-methyl-GMP + diphosphate + H(+). Its function is as follows. Nucleoside triphosphate pyrophosphatase that hydrolyzes 7-methyl-GTP (m(7)GTP). May have a dual role in cell division arrest and in preventing the incorporation of modified nucleotides into cellular nucleic acids. In Burkholderia orbicola (strain AU 1054), this protein is 7-methyl-GTP pyrophosphatase.